Consider the following 249-residue polypeptide: Kallikrein-7 (249 aa).

A signal peptide spans 1–21 (MGVWLLSLITVLLSLALETAG). Positions 22–25 (QGER) are cleaved as a propeptide — activation peptide. The segment at 26 to 246 (IIDGYKCKEG…YKRWVMETMK (221 aa)) is serine protease. Intrachain disulfides connect Cys32–Cys161, Cys51–Cys67, Cys133–Cys235, Cys140–Cys207, Cys172–Cys186, and Cys197–Cys222. Catalysis depends on charge relay system residues His66 and Asp108. Residue Ser201 is the Charge relay system of the active site.

Belongs to the peptidase S1 family. Kallikrein subfamily. As to expression, expressed in skin and, at lower levels, in lung, kidney, brain, heart and spleen. In skin, expressed in high suprabasal keratinocytes and in the luminal parts of hair follicles. Not detected in liver and skeletal muscle.

It is found in the secreted. The catalysed reaction is Cleavage of proteins with aromatic side chains in the P1 position.. Inhibited by Zn2+ and Cu2+ at low micromolar concentrations. Inhibited by SERPINA12. Its function is as follows. May catalyze the degradation of intercellular cohesive structures in the cornified layer of the skin in the continuous shedding of cells from the skin surface. Specific for amino acid residues with aromatic side chains in the P1 position. Cleaves insulin A chain at '14-Tyr-|-Gln-15' and insulin B chain at '6-Leu-|-Cys-7', '16-Tyr-|-Leu-17', '25-Phe-|-Tyr-26' and '26-Tyr-|-Thr-27'. Could play a role in the activation of precursors to inflammatory cytokines. The chain is Kallikrein-7 (Klk7) from Mus musculus (Mouse).